The primary structure comprises 180 residues: MISQNNKGYALALFEIANEELKLEQYFQEVKKLNEIINENEDLVKLLSSKEIQLEKKLKILENIFTNHFTVNINNFLKLIITNNLFIYIKSILKIFLDIASKKLNISYGKIYSSKKLDEKIISNLEKFYSDKLSKKVEMLNLIDTTLIKGIRIEIENTIHENSIKNNIKELQKSILEKEQ.

Belongs to the ATPase delta chain family. As to quaternary structure, F-type ATPases have 2 components, F(1) - the catalytic core - and F(0) - the membrane proton channel. F(1) has five subunits: alpha(3), beta(3), gamma(1), delta(1), epsilon(1). F(0) has three main subunits: a(1), b(2) and c(10-14). The alpha and beta chains form an alternating ring which encloses part of the gamma chain. F(1) is attached to F(0) by a central stalk formed by the gamma and epsilon chains, while a peripheral stalk is formed by the delta and b chains.

The protein resides in the cell membrane. F(1)F(0) ATP synthase produces ATP from ADP in the presence of a proton or sodium gradient. F-type ATPases consist of two structural domains, F(1) containing the extramembraneous catalytic core and F(0) containing the membrane proton channel, linked together by a central stalk and a peripheral stalk. During catalysis, ATP synthesis in the catalytic domain of F(1) is coupled via a rotary mechanism of the central stalk subunits to proton translocation. In terms of biological role, this protein is part of the stalk that links CF(0) to CF(1). It either transmits conformational changes from CF(0) to CF(1) or is implicated in proton conduction. In Mycoplasma mobile (strain ATCC 43663 / 163K / NCTC 11711) (Mesomycoplasma mobile), this protein is ATP synthase subunit delta.